We begin with the raw amino-acid sequence, 607 residues long: Probable CoA ligase CCL8 (607 aa).

ATP is bound by residues 236–244, 391–396, aspartate 474, 486–489, and lysine 591; these read TSGTTGKPK, ERYGMT, and ILGR. The interval 305–391 is SBD1; it reads SVRGIWQRWR…QTITGHRLLE (87 aa). The SBD2 stretch occupies residues 392–453; that stretch reads RYGMTEFVMA…VRSPSLFKEY (62 aa).

The protein belongs to the ATP-dependent AMP-binding enzyme family. Mostly expressed at low levels in glandular trichomes (lupulin glands) after flowering, and, to a lower extent, in stems, leaves, flowers and cones.

The protein resides in the cytoplasm. The protein localises to the cytosol. The protein is Probable CoA ligase CCL8 of Humulus lupulus (European hop).